The primary structure comprises 465 residues: Interferon-inducible GTPase 5 (465 aa).

The 183-residue stretch at 53-235 (TRLEVGVTGE…PLLMSTWERD (183 aa)) folds into the IRG-type G domain. GTP-binding positions include 62-69 (ESGAGKSS), 87-91 (TGVVE), 169-171 (KVD), and 216-218 (SNL). Phosphoserine occurs at positions 247 and 304. Residues 405-438 (EEEEDTQPDVSLEAAGDNGVEKRGSGEGSMEEAP) are disordered.

This sequence belongs to the TRAFAC class dynamin-like GTPase superfamily. IRG family.

The protein localises to the cell projection. It localises to the cilium. The protein resides in the flagellum. Its subcellular location is the lipid droplet. The enzyme catalyses GTP + H2O = GDP + phosphate + H(+). In terms of biological role, required for sperm motility and therefore male fertility, via positive regulation of spermatozoa fibrous sheath formation. This chain is Interferon-inducible GTPase 5 (IRGC), found in Bos taurus (Bovine).